The chain runs to 636 residues: 1-deoxy-D-xylulose-5-phosphate synthase (636 aa).

Thiamine diphosphate-binding positions include histidine 72 and 113–115 (GHA). Aspartate 144 is a binding site for Mg(2+). Residues 145–146 (GA), asparagine 174, tyrosine 287, and glutamate 370 contribute to the thiamine diphosphate site. Asparagine 174 is a binding site for Mg(2+).

The protein belongs to the transketolase family. DXPS subfamily. As to quaternary structure, homodimer. It depends on Mg(2+) as a cofactor. The cofactor is thiamine diphosphate.

The catalysed reaction is D-glyceraldehyde 3-phosphate + pyruvate + H(+) = 1-deoxy-D-xylulose 5-phosphate + CO2. The protein operates within metabolic intermediate biosynthesis; 1-deoxy-D-xylulose 5-phosphate biosynthesis; 1-deoxy-D-xylulose 5-phosphate from D-glyceraldehyde 3-phosphate and pyruvate: step 1/1. Its function is as follows. Catalyzes the acyloin condensation reaction between C atoms 2 and 3 of pyruvate and glyceraldehyde 3-phosphate to yield 1-deoxy-D-xylulose-5-phosphate (DXP). The sequence is that of 1-deoxy-D-xylulose-5-phosphate synthase from Microcystis aeruginosa (strain NIES-843 / IAM M-2473).